Reading from the N-terminus, the 65-residue chain is Large ribosomal subunit protein bL35 (65 aa).

A disordered region spans residues 1 to 46 (MPKMKTRQSAAKRYEVTGSGKLRRRRAGKNHLLQHKSAARKRSLST). Positions 21-44 (KLRRRRAGKNHLLQHKSAARKRSL) are enriched in basic residues.

The protein belongs to the bacterial ribosomal protein bL35 family.

The polypeptide is Large ribosomal subunit protein bL35 (Gloeobacter violaceus (strain ATCC 29082 / PCC 7421)).